Reading from the N-terminus, the 273-residue chain is Multivesicular body subunit 12A (273 aa).

The MABP domain occupies 9–151 (GMPLAGLAWS…GFAIWCRKAK (143 aa)). The residue at position 130 (Thr130) is a Phosphothreonine. Positions 154 to 186 (RPVPKPRALSRDVRDLSLDSPGQPSKGGFPERT) are disordered. Residues 155-160 (PVPKPR) carry the SH3-binding motif. A phosphoserine mark is found at Ser163, Ser170, Ser195, and Ser202. The tract at residues 192-273 (SRASTLRRND…AAARLPPSVS (82 aa)) is interaction with TSG101, VPS37B and VPS28. Phosphotyrosine is present on Tyr204. Ser207 is subject to Phosphoserine. The region spanning 215–265 (MDGVPFTLHPRFEGKSCGPLAFSAFADLTIKSLADIEAEYNYGFVVEKTAA) is the UMA domain.

This sequence belongs to the MVB12 family. Component of the ESCRT-I complex (endosomal sorting complex required for transport I) which consists of TSG101, VPS28, a VPS37 protein (VPS37A to -D) and MVB12A or MVB12B in a 1:1:1:1 stoichiometry. Interacts with CD2AP and CIN85/SH3KBP1. Interacts with CD2AP (via one of the SH3 domains). Interacts with TSG101; the association appears to be mediated by the TSG101-VPS37 binary subcomplex. Interacts with VPS28. Interacts with VPS37B; the association appears to be mediated by the TSG101-VPS37 binary subcomplex. Interacts with VPS37C; the association appears to be mediated by the TSG101-VPS37 binary subcomplex. Interacts with VPS37D; the association appears to be mediated by the TSG101-VPS37 binary subcomplex. Interacts with CEP55. In terms of processing, phosphorylated on Tyr-204 upon EGF stimulation. Phosphorylation is required for interaction with CD2AP and CIN85/SH3KBP1.

The protein localises to the cytoplasm. The protein resides in the cytoskeleton. Its subcellular location is the nucleus. It localises to the endosome. It is found in the microtubule organizing center. The protein localises to the centrosome. The protein resides in the late endosome membrane. In terms of biological role, component of the ESCRT-I complex, a regulator of vesicular trafficking process. Required for the sorting of endocytic ubiquitinated cargos into multivesicular bodies. May be involved in the ligand-mediated internalization and down-regulation of EGF receptor. This is Multivesicular body subunit 12A (MVB12A) from Bos taurus (Bovine).